The primary structure comprises 549 residues: Glucose-6-phosphate isomerase (549 aa).

The active-site Proton donor is Glu355. Catalysis depends on residues His386 and Lys514.

Belongs to the GPI family.

The protein localises to the cytoplasm. It carries out the reaction alpha-D-glucose 6-phosphate = beta-D-fructose 6-phosphate. It participates in carbohydrate biosynthesis; gluconeogenesis. It functions in the pathway carbohydrate degradation; glycolysis; D-glyceraldehyde 3-phosphate and glycerone phosphate from D-glucose: step 2/4. In terms of biological role, catalyzes the reversible isomerization of glucose-6-phosphate to fructose-6-phosphate. The protein is Glucose-6-phosphate isomerase of Cronobacter sakazakii (strain ATCC BAA-894) (Enterobacter sakazakii).